We begin with the raw amino-acid sequence, 156 residues long: Small ribosomal subunit protein uS7 (156 aa).

The protein belongs to the universal ribosomal protein uS7 family. Part of the 30S ribosomal subunit. Contacts proteins S9 and S11.

In terms of biological role, one of the primary rRNA binding proteins, it binds directly to 16S rRNA where it nucleates assembly of the head domain of the 30S subunit. Is located at the subunit interface close to the decoding center, probably blocks exit of the E-site tRNA. The chain is Small ribosomal subunit protein uS7 from Thermoanaerobacter sp. (strain X514).